The sequence spans 315 residues: Ribosomal RNA small subunit methyltransferase H (315 aa).

S-adenosyl-L-methionine is bound by residues Gly-37 to His-39, Asp-57, Phe-83, Asp-105, and Gln-112.

Belongs to the methyltransferase superfamily. RsmH family.

It localises to the cytoplasm. The catalysed reaction is cytidine(1402) in 16S rRNA + S-adenosyl-L-methionine = N(4)-methylcytidine(1402) in 16S rRNA + S-adenosyl-L-homocysteine + H(+). Functionally, specifically methylates the N4 position of cytidine in position 1402 (C1402) of 16S rRNA. In Pseudomonas fluorescens (strain SBW25), this protein is Ribosomal RNA small subunit methyltransferase H.